The following is a 431-amino-acid chain: Adenylosuccinate synthetase (431 aa).

Residues 13–19 (GDEGKGK) and 41–43 (GHT) each bind GTP. Residue Asp14 is the Proton acceptor of the active site. Positions 14 and 41 each coordinate Mg(2+). IMP-binding positions include 14–17 (DEGK), 39–42 (NAGH), Thr130, Arg144, Gln225, Thr240, and Arg304. His42 serves as the catalytic Proton donor. A substrate-binding site is contributed by 300–306 (ATTGRKR). Residues Arg306, 332–334 (KLD), and 415–417 (STG) each bind GTP.

It belongs to the adenylosuccinate synthetase family. In terms of assembly, homodimer. It depends on Mg(2+) as a cofactor.

It localises to the cytoplasm. The enzyme catalyses IMP + L-aspartate + GTP = N(6)-(1,2-dicarboxyethyl)-AMP + GDP + phosphate + 2 H(+). It functions in the pathway purine metabolism; AMP biosynthesis via de novo pathway; AMP from IMP: step 1/2. Plays an important role in the de novo pathway of purine nucleotide biosynthesis. Catalyzes the first committed step in the biosynthesis of AMP from IMP. This chain is Adenylosuccinate synthetase, found in Shewanella woodyi (strain ATCC 51908 / MS32).